The chain runs to 332 residues: Holliday junction branch migration complex subunit RuvB (332 aa).

The segment at 1-181 (MARILDNDVM…FGITGHMEYY (181 aa)) is large ATPase domain (RuvB-L). Residues Leu-20, Arg-21, Gly-62, Lys-65, Thr-66, Thr-67, 128 to 130 (EDF), Arg-171, Tyr-181, and Arg-218 contribute to the ATP site. Thr-66 lines the Mg(2+) pocket. Residues 182–252 (QEKDLTEIVE…ITDRALTMLD (71 aa)) form a small ATPAse domain (RuvB-S) region. Residues 255-332 (REGLDYIDQK…RHLGYPYQNT (78 aa)) are head domain (RuvB-H). Positions 291, 310, 312, and 315 each coordinate DNA.

The protein belongs to the RuvB family. In terms of assembly, homohexamer. Forms an RuvA(8)-RuvB(12)-Holliday junction (HJ) complex. HJ DNA is sandwiched between 2 RuvA tetramers; dsDNA enters through RuvA and exits via RuvB. An RuvB hexamer assembles on each DNA strand where it exits the tetramer. Each RuvB hexamer is contacted by two RuvA subunits (via domain III) on 2 adjacent RuvB subunits; this complex drives branch migration. In the full resolvosome a probable DNA-RuvA(4)-RuvB(12)-RuvC(2) complex forms which resolves the HJ.

The protein localises to the cytoplasm. It catalyses the reaction ATP + H2O = ADP + phosphate + H(+). Functionally, the RuvA-RuvB-RuvC complex processes Holliday junction (HJ) DNA during genetic recombination and DNA repair, while the RuvA-RuvB complex plays an important role in the rescue of blocked DNA replication forks via replication fork reversal (RFR). RuvA specifically binds to HJ cruciform DNA, conferring on it an open structure. The RuvB hexamer acts as an ATP-dependent pump, pulling dsDNA into and through the RuvAB complex. RuvB forms 2 homohexamers on either side of HJ DNA bound by 1 or 2 RuvA tetramers; 4 subunits per hexamer contact DNA at a time. Coordinated motions by a converter formed by DNA-disengaged RuvB subunits stimulates ATP hydrolysis and nucleotide exchange. Immobilization of the converter enables RuvB to convert the ATP-contained energy into a lever motion, pulling 2 nucleotides of DNA out of the RuvA tetramer per ATP hydrolyzed, thus driving DNA branch migration. The RuvB motors rotate together with the DNA substrate, which together with the progressing nucleotide cycle form the mechanistic basis for DNA recombination by continuous HJ branch migration. Branch migration allows RuvC to scan DNA until it finds its consensus sequence, where it cleaves and resolves cruciform DNA. This chain is Holliday junction branch migration complex subunit RuvB, found in Streptococcus pyogenes serotype M12 (strain MGAS9429).